Here is a 927-residue protein sequence, read N- to C-terminus: Small conductance calcium-activated potassium channel protein (927 aa).

Residues 1–31 (MSIQKLNDTTNSGYVSSEETDSLLVSSSNPS) show a composition bias toward polar residues. Disordered stretches follow at residues 1 to 131 (MSIQ…EDVE), 181 to 251 (LSLK…VKSA), and 296 to 336 (HLHQ…SSST). The span at 45 to 62 (SNSTNGPTTGASTSSSGS) shows a compositional bias: low complexity. Residues 63 to 77 (VSGGGGGSGSGGGSA) are compositionally biased toward gly residues. 2 stretches are compositionally biased toward polar residues: residues 95 to 107 (TSTYLTSPQQSQH) and 200 to 214 (NLGTSSYQNLASSIP). Low complexity-rich tracts occupy residues 219–232 (SRCRACRNCSRRAS) and 296–308 (HLHQQQLQQSQQQ). Polar residues predominate over residues 314 to 336 (ITSSPTNGSRIIRQSSQPESSST). The chain crosses the membrane as a helical span at residues 489 to 509 (ALVMGMFGIIVMVIENELSSA). A helical membrane pass occupies residues 530 to 550 (TVILLGLIVAYHALEVQLFMI). A helical membrane pass occupies residues 569–589 (IGLELFICAIHPIPGEYYFQW). The chain crosses the membrane as a helical span at residues 609-629 (VALSLPMFLRLYLICRVMLLH). A helical membrane pass occupies residues 658–678 (LMTICPGTVLLVFMVSLWIIA). An intramembrane region (pore-forming) is located at residues 696–716 (LLNSMWLTAITFLCVGYGDIV). Residues 724-744 (GITLTCGMVGAGCTALLVAVV) traverse the membrane as a helical segment. The tract at residues 763 to 839 (DTQLTKRLKN…ITDMAKTQNT (77 aa)) is calmodulin-binding.

This sequence belongs to the potassium channel KCNN family. SK subfamily. As to quaternary structure, heterooligomer. The complex is composed of 4 channel subunits each of which binds to a calmodulin subunit which regulates the channel activity through calcium-binding.

It is found in the membrane. Its function is as follows. Forms a voltage-independent potassium channel activated by intracellular calcium. Activation is followed by membrane hyperpolarization. Thought to regulate neuronal excitability by contributing to the slow component of synaptic afterhyperpolarization. The channel is blocked by apamin. The chain is Small conductance calcium-activated potassium channel protein from Drosophila melanogaster (Fruit fly).